The chain runs to 1046 residues: UDP-N-acetylglucosamine--peptide N-acetylglucosaminyltransferase 110 kDa subunit (1046 aa).

Alanine 2 carries the post-translational modification N-acetylalanine. Phosphoserine; by GSK3-beta; alternate is present on residues serine 3 and serine 4. 2 O-linked (GlcNAc) serine; alternate glycosylation sites follow: serine 3 and serine 4. The O-linked (GlcNAc) serine glycan is linked to aspartate 10. Threonine 12 is a glycosylation site (O-linked (GlcNAc) threonine). Methionine 18 is a glycosylation site (O-linked (GlcNAc) serine). The residue at position 20 (serine 20) is a Phosphoserine. Residues 21–54 (FQGLAELAHREYQAGDFEAAERHCMQLWRQEPDN) form a TPR 1 repeat. Residue glutamate 38 is glycosylated (O-linked (GlcNAc) threonine). O-linked (GlcNAc) serine glycosylation is found at proline 52 and glycine 56. 11 TPR repeats span residues 89–122 (AEAY…KPDF), 123–156 (IDGY…NPDL), 157–190 (YCVR…QPNF), 191–224 (AVAW…DPNF), 225–258 (LDAY…SPNH), 259–292 (AVVH…QPHF), 293–326 (PDAY…CPTH), 327–360 (ADSL…FPEF), 361–394 (AAAH…SPTF), 395–428 (ADAY…NPAF), and 429–462 (ADAH…KPDF). Serine 399 carries an O-linked (GlcNAc) serine; by autocatalysis glycan. Phosphothreonine; by AMPK is present on threonine 454. The stretch at 463–473 (PDAYCNLAHCL) is one TPR 13; truncated repeat. The DFP motif motif lies at 464–466 (DAY). Positions 487-503 (KKLVSIVADQLEKNRLP) match the Nuclear localization signal motif. The Proton acceptor role is filled by histidine 508. Residues glutamine 849, lysine 852, 906–908 (APK), 911–914 (HVRR), 930–932 (HTT), and aspartate 935 contribute to the UDP site. A Phosphotyrosine modification is found at tyrosine 989. Residues 991 to 1010 (KKVRGKVWKQRISSPLFNTK) form a required for phosphatidylinositol 3,4,5-triphosphate binding region.

Belongs to the glycosyltransferase 41 family. O-GlcNAc transferase subfamily. As to quaternary structure, monomer; may exist in different oligomerization states in cells. Homotrimer, oligomerizes via TPR repeats 6 and 7. Trimerization is not necessary for activity in vitro, however it increases affinity for UDP-GlcNAc. Component of a THAP1/THAP3-HCFC1-OGT complex. Component of the NSL complex at least composed of MOF/KAT8, KANSL1, KANSL2, KANSL3, MCRS1, PHF20, OGT1/OGT, WDR5 and HCFC1. Found in a complex with KIF5B, RHOT1, RHOT2 and TRAK1. Found in a complex composed of at least SINHCAF, SIN3A, HDAC1, SAP30, RBBP4, OGT and TET1. Component of a complex composed of KMT2E/MLL5 (isoform 3), OGT (isoform 1) and USP7; the complex stabilizes KMT2E/MLL5, preventing KMT2E/MLL5 ubiquitination and proteasomal-mediated degradation. Interacts (via TPRs 1-6) with SIN3A; the interaction mediates transcriptional repression in parallel with histone deacetylase. Interacts (via TPR 5-6) with TET1, TET2 and TET3. Interacts (via TPR repeats 6 and 7) with ATXN10. Interacts with NSD2. Interacts with PROSER1; this interaction mediates TET2 O-GlcNAcylation and stability by promoting the interaction between OGT and TET2. Interacts with USP7. In terms of assembly, (Microbial infection) Interacts with human T-cell leukemia virus 1/HTLV-1 protein Tax; this interaction increases Tax interacting partner CREB1 O-GlcNAcylation. In terms of processing, ubiquitinated by the SCF(FBXO31) complex, leading to its proteasomal degradation. Post-translationally, phosphorylation on Ser-3 or Ser-4 by GSK3-beta positively regulates its activity. Phosphorylation at Thr-454 by AMPK promotes nuclear localization. Glycosylated via autocatalysis; O-GlcNAcylation at Ser-399 promotes nuclear localization. In terms of processing, glycosylated via autocatalysis; does not affect the enzyme activity but regulates substrate selectivity. As to expression, highly expressed in pancreas and to a lesser extent in skeletal muscle, heart, brain and placenta. Present in trace amounts in lung and liver.

Its subcellular location is the nucleus. The protein localises to the cytoplasm. It is found in the mitochondrion. The protein resides in the membrane. It localises to the cell membrane. Its subcellular location is the mitochondrion membrane. The protein localises to the cell projection. The enzyme catalyses L-seryl-[protein] + UDP-N-acetyl-alpha-D-glucosamine = 3-O-(N-acetyl-beta-D-glucosaminyl)-L-seryl-[protein] + UDP + H(+). The catalysed reaction is L-threonyl-[protein] + UDP-N-acetyl-alpha-D-glucosamine = 3-O-(N-acetyl-beta-D-glucosaminyl)-L-threonyl-[protein] + UDP + H(+). It functions in the pathway protein modification; protein glycosylation. Subject to product inhibition by UDP. Catalyzes the transfer of a single N-acetylglucosamine from UDP-GlcNAc to a serine or threonine residue in cytoplasmic and nuclear proteins resulting in their modification with a beta-linked N-acetylglucosamine (O-GlcNAc). Glycosylates a large and diverse number of proteins including histone H2B, AKT1, AMPK, ATG4B, CAPRIN1, EZH2, FNIP1, GSDMD, KRT7, LMNA, LMNB1, LMNB2, RPTOR, HOXA1, PFKL, KMT2E/MLL5, MAPT/TAU, TET2, RBL2, RET, NOD2 and HCFC1. Can regulate their cellular processes via cross-talk between glycosylation and phosphorylation or by affecting proteolytic processing. Involved in insulin resistance in muscle and adipocyte cells via glycosylating insulin signaling components and inhibiting the 'Thr-308' phosphorylation of AKT1, enhancing IRS1 phosphorylation and attenuating insulin signaling. Involved in glycolysis regulation by mediating glycosylation of 6-phosphofructokinase PFKL, inhibiting its activity. Plays a key role in chromatin structure by mediating O-GlcNAcylation of 'Ser-112' of histone H2B: recruited to CpG-rich transcription start sites of active genes via its interaction with TET proteins (TET1, TET2 or TET3). As part of the NSL complex indirectly involved in acetylation of nucleosomal histone H4 on several lysine residues. O-GlcNAcylation of 'Ser-75' of EZH2 increases its stability, and facilitating the formation of H3K27me3 by the PRC2/EED-EZH2 complex. Stabilizes KMT2E/MLL5 by mediating its glycosylation, thereby preventing KMT2E/MLL5 ubiquitination. Regulates circadian oscillation of the clock genes and glucose homeostasis in the liver. Stabilizes clock proteins BMAL1 and CLOCK through O-glycosylation, which prevents their ubiquitination and subsequent degradation. Promotes the CLOCK-BMAL1-mediated transcription of genes in the negative loop of the circadian clock such as PER1/2 and CRY1/2. O-glycosylates HCFC1 and regulates its proteolytic processing and transcriptional activity. Component of a THAP1/THAP3-HCFC1-OGT complex that is required for the regulation of the transcriptional activity of RRM1. Regulates mitochondrial motility in neurons by mediating glycosylation of TRAK1. Promotes autophagy by mediating O-glycosylation of ATG4B. Acts as a regulator of mTORC1 signaling by mediating O-glycosylation of RPTOR and FNIP1: O-GlcNAcylation of RPTOR in response to glucose sufficiency promotes activation of the mTORC1 complex. In terms of biological role, the mitochondrial isoform (mOGT) is cytotoxic and triggers apoptosis in several cell types including INS1, an insulinoma cell line. Functionally, has N-acetylglucosaminyltransferase activity: glycosylates proteins, such as HNRNPU, NEUROD1, NUP62 and PDCD6IP. Displays specific substrate selectivity compared to other isoforms. The chain is UDP-N-acetylglucosamine--peptide N-acetylglucosaminyltransferase 110 kDa subunit from Homo sapiens (Human).